The primary structure comprises 1579 residues: DNA-directed RNA polymerase subunit beta' (1579 aa).

Residues Cys-65, Cys-67, Cys-80, and Cys-83 each coordinate Zn(2+). Positions 601, 603, and 605 each coordinate Mg(2+). Cys-938, Cys-1012, Cys-1019, and Cys-1022 together coordinate Zn(2+).

The protein belongs to the RNA polymerase beta' chain family. In terms of assembly, the RNAP catalytic core consists of 2 alpha, 1 beta, 1 beta' and 1 omega subunit. When a sigma factor is associated with the core the holoenzyme is formed, which can initiate transcription. It depends on Mg(2+) as a cofactor. The cofactor is Zn(2+).

It carries out the reaction RNA(n) + a ribonucleoside 5'-triphosphate = RNA(n+1) + diphosphate. In terms of biological role, DNA-dependent RNA polymerase catalyzes the transcription of DNA into RNA using the four ribonucleoside triphosphates as substrates. The protein is DNA-directed RNA polymerase subunit beta' of Sulfurihydrogenibium sp. (strain YO3AOP1).